The sequence spans 412 residues: MKKYLVGGAVRDRLLQIPVKERDWVVIGTTLQDMLKAGYQQVGKDFPVFLHPKSHEEYALARIEKKSATGGYTGFTYKASSEITLEEDLKRRDLTINAIACDENGSLIDPYNGQRDLNQRWLRHVSEAFCEDPLRVLRVARFAAQLAYLNFRIVPETRLMMQHMISELPLLSPERIWKETEKALATRDPQIYFQVLRDCGALKTLFPEIDALFGVPAPAKWHPEIDTGIHTMMTVAMAARLSDSIAVRFASLCHDIGKGLTPRDHWPSHHGHGPAGIPLVQSLCQRLRVPNSIRNLAIIVTEYHDLLHYAVKLKPKTLIKLFYAIDVWRRPERLEQIIIISEADARGRAGYENHFYKPGQFIREAYRIASSIMPCQVISHNLTGNKIGEKLRQYRQQAIATWKQQNYESKQQ.

Residues Gly-8 and Arg-11 each coordinate ATP. Gly-8 and Arg-11 together coordinate CTP. Mg(2+)-binding residues include Glu-21 and Asp-23. Residues Arg-92, Arg-138, and Arg-141 each coordinate ATP. Residues Arg-92, Arg-138, and Arg-141 each contribute to the CTP site. The HD domain maps to 227–328; it reads TGIHTMMTVA…IKLFYAIDVW (102 aa).

Belongs to the tRNA nucleotidyltransferase/poly(A) polymerase family. Bacterial CCA-adding enzyme type 1 subfamily. As to quaternary structure, monomer. Can also form homodimers and oligomers. Requires Mg(2+) as cofactor. The cofactor is Ni(2+).

The catalysed reaction is a tRNA precursor + 2 CTP + ATP = a tRNA with a 3' CCA end + 3 diphosphate. The enzyme catalyses a tRNA with a 3' CCA end + 2 CTP + ATP = a tRNA with a 3' CCACCA end + 3 diphosphate. Catalyzes the addition and repair of the essential 3'-terminal CCA sequence in tRNAs without using a nucleic acid template. Adds these three nucleotides in the order of C, C, and A to the tRNA nucleotide-73, using CTP and ATP as substrates and producing inorganic pyrophosphate. tRNA 3'-terminal CCA addition is required both for tRNA processing and repair. Also involved in tRNA surveillance by mediating tandem CCA addition to generate a CCACCA at the 3' terminus of unstable tRNAs. While stable tRNAs receive only 3'-terminal CCA, unstable tRNAs are marked with CCACCA and rapidly degraded. The chain is Multifunctional CCA protein from Baumannia cicadellinicola subsp. Homalodisca coagulata.